We begin with the raw amino-acid sequence, 283 residues long: uncharacterized protein (283 aa).

In terms of domain architecture, HTH rpiR-type spans T3–P79. A DNA-binding region (H-T-H motif) is located at residues V39–K58. Residues A123 to E264 enclose the SIS domain.

This is an uncharacterized protein from Bacillus subtilis (strain 168).